Here is a 111-residue protein sequence, read N- to C-terminus: Cytochrome c (111 aa).

Serine 1 carries the post-translational modification N-acetylserine. Positions 22, 25, and 26 each coordinate heme c. Lysine 80 bears the N6,N6,N6-trimethyllysine mark. Methionine 88 is a binding site for heme c.

This sequence belongs to the cytochrome c family. Binds 1 heme c group covalently per subunit.

Its subcellular location is the mitochondrion intermembrane space. Electron carrier protein. The oxidized form of the cytochrome c heme group can accept an electron from the heme group of the cytochrome c1 subunit of cytochrome reductase. Cytochrome c then transfers this electron to the cytochrome oxidase complex, the final protein carrier in the mitochondrial electron-transport chain. This is Cytochrome c from Ulva intestinalis (Hollow green nori).